The sequence spans 48 residues: Large ribosomal subunit protein bL33B (48 aa).

The protein belongs to the bacterial ribosomal protein bL33 family.

The protein is Large ribosomal subunit protein bL33B (rpmG2) of Mycoplasma pneumoniae (strain ATCC 29342 / M129 / Subtype 1) (Mycoplasmoides pneumoniae).